Reading from the N-terminus, the 432-residue chain is Neuronal pentraxin-2 (432 aa).

An N-terminal signal peptide occupies residues 1-14 (MLALLTAGVALAVA). Residues Asn149 and Asn190 are each glycosylated (N-linked (GlcNAc...) asparagine). Residues 224 to 425 (DAFKVSLPLR…GASKWPVETC (202 aa)) form the Pentraxin (PTX) domain. Cys254 and Cys314 are disulfide-bonded. Residues Asn278, Glu356, Gln357, Asp358, and Gln368 each contribute to the Ca(2+) site. Asn394 carries an N-linked (GlcNAc...) asparagine glycan.

As to quaternary structure, homooligomer or heterooligomer (probably pentamer) with neuronal pentraxin receptor (NPTXR). Ca(2+) is required as a cofactor.

The protein resides in the secreted. Functionally, likely to play role in the modification of cellular properties that underlie long-term plasticity. Binds to agar matrix in a calcium-dependent manner. The polypeptide is Neuronal pentraxin-2 (Nptx2) (Rattus norvegicus (Rat)).